The chain runs to 724 residues: Outer spore wall protein 2 (724 aa).

Disordered regions lie at residues 407 to 427 and 477 to 497; these read NSGQ…KNRV and TSGG…YDDK.

The protein localises to the cytoplasm. It localises to the prospore membrane. Functionally, may be involved in a late step of spore wall assembly. In Saccharomyces cerevisiae (strain ATCC 204508 / S288c) (Baker's yeast), this protein is Outer spore wall protein 2 (OSW2).